The chain runs to 104 residues: Type VII secretion system extracellular protein B (104 aa).

Belongs to the WXG100 family. Homodimer. When mixed with EsxA does not form heterodimers.

Its subcellular location is the secreted. In terms of biological role, virulence factor that is important for the establishment of infection in the host. EsxB is required for EsxA synthesis as well as secretion. Mediates together with EsxA the release of S.aureus from the host cell. Also inhibits host cytokine production and thus modulates dendritic cell-mediated immunity. This is Type VII secretion system extracellular protein B from Staphylococcus aureus (strain MSSA476).